Consider the following 1387-residue polypeptide: DNA-directed RNA polymerase subunit beta'' (1387 aa).

Residues C224, C295, C302, and C305 each contribute to the Zn(2+) site.

The protein belongs to the RNA polymerase beta' chain family. RpoC2 subfamily. In plastids the minimal PEP RNA polymerase catalytic core is composed of four subunits: alpha, beta, beta', and beta''. When a (nuclear-encoded) sigma factor is associated with the core the holoenzyme is formed, which can initiate transcription. Zn(2+) serves as cofactor.

Its subcellular location is the plastid. It localises to the chloroplast. The catalysed reaction is RNA(n) + a ribonucleoside 5'-triphosphate = RNA(n+1) + diphosphate. DNA-dependent RNA polymerase catalyzes the transcription of DNA into RNA using the four ribonucleoside triphosphates as substrates. The polypeptide is DNA-directed RNA polymerase subunit beta'' (Panax ginseng (Korean ginseng)).